Consider the following 147-residue polypeptide: Cyanate hydratase (147 aa).

Active-site residues include Arg-88, Glu-91, and Ser-114.

The protein belongs to the cyanase family.

It carries out the reaction cyanate + hydrogencarbonate + 3 H(+) = NH4(+) + 2 CO2. Functionally, catalyzes the reaction of cyanate with bicarbonate to produce ammonia and carbon dioxide. This Polaromonas sp. (strain JS666 / ATCC BAA-500) protein is Cyanate hydratase.